The sequence spans 547 residues: Inositol 1,4,5-trisphosphate receptor-interacting protein-like 1 (547 aa).

An N-terminal signal peptide occupies residues 1-22; the sequence is MAVISLMFLAVMYVVHHPLMVS. At 23 to 96 the chain is on the extracellular side; that stretch reads DRMDLDTLAR…PFQAGGQDGG (74 aa). Residues 28-66 adopt a coiled-coil conformation; that stretch reads DTLARSRQLEKRMSEEMRQLEMEFEERSRAAEQKQKVEN. A helical membrane pass occupies residues 97-117; sequence PLGWILGNLWNAGLFCLFLIF. The Cytoplasmic portion of the chain corresponds to 118–547; the sequence is ELLRQSMQHE…LPCSPVAGGL (430 aa).

This sequence belongs to the ITPRIP family.

Its subcellular location is the cell membrane. Functions as a ligand of CD3E, inhibiting TCR-CD3 complex signaling to regulate T cell activation. Induces stable CD3E-NCK1 binding, thereby preventing the CD3E-ZAP70 interaction and subsequently inhibiting the activation of the downstream ERK-NFkB signaling cascade and calcium influx. This Mus musculus (Mouse) protein is Inositol 1,4,5-trisphosphate receptor-interacting protein-like 1 (Itpripl1).